The primary structure comprises 163 residues: Bacterial microcompartment assembly protein PduM (163 aa).

This sequence belongs to the PduM family. Interacts with shell protein PduK.

The protein localises to the bacterial microcompartment. It participates in polyol metabolism; 1,2-propanediol degradation. In terms of biological role, plays an essential role in assembly and/or stability of the bacterial microcompartment (BMC) dedicated to 1,2-propanediol (1,2-PD) degradation. Overexpression impairs BMC formation. Its function is as follows. The 1,2-PD-specific bacterial microcompartment (BMC) concentrates low levels of 1,2-PD catabolic enzymes, concentrates volatile reaction intermediates thus enhancing pathway flux and keeps the level of toxic, mutagenic propionaldehyde low. This chain is Bacterial microcompartment assembly protein PduM, found in Salmonella typhimurium (strain LT2 / SGSC1412 / ATCC 700720).